A 317-amino-acid polypeptide reads, in one-letter code: ADP-L-glycero-D-manno-heptose-6-epimerase (317 aa).

NADP(+) is bound by residues 10-11, 31-32, lysine 38, lysine 53, 75-79, and asparagine 92; these read FI, DD, and QGACS. Residue tyrosine 139 is the Proton acceptor of the active site. Residue lysine 143 coordinates NADP(+). Asparagine 166 contributes to the substrate binding site. 2 residues coordinate NADP(+): valine 167 and lysine 175. Residue lysine 175 is the Proton acceptor of the active site. Residues glycine 177, histidine 184, 198–201, arginine 211, and tyrosine 275 each bind substrate; that span reads FQGH.

Belongs to the NAD(P)-dependent epimerase/dehydratase family. HldD subfamily. In terms of assembly, homopentamer. The cofactor is NADP(+).

The enzyme catalyses ADP-D-glycero-beta-D-manno-heptose = ADP-L-glycero-beta-D-manno-heptose. Its pathway is nucleotide-sugar biosynthesis; ADP-L-glycero-beta-D-manno-heptose biosynthesis; ADP-L-glycero-beta-D-manno-heptose from D-glycero-beta-D-manno-heptose 7-phosphate: step 4/4. In terms of biological role, catalyzes the interconversion between ADP-D-glycero-beta-D-manno-heptose and ADP-L-glycero-beta-D-manno-heptose via an epimerization at carbon 6 of the heptose. The sequence is that of ADP-L-glycero-D-manno-heptose-6-epimerase from Shewanella loihica (strain ATCC BAA-1088 / PV-4).